Reading from the N-terminus, the 347-residue chain is GMP reductase (347 aa).

108–131 (ADFEKTKQILDLNPALNFVCIDVA) lines the NADP(+) pocket. K(+) is bound by residues G181 and G183. Catalysis depends on C186, which acts as the Thioimidate intermediate. 216–239 (IVSDGGCTTPGDVAKAFGGGADFV) is a binding site for NADP(+).

Belongs to the IMPDH/GMPR family. GuaC type 1 subfamily. In terms of assembly, homotetramer.

The catalysed reaction is IMP + NH4(+) + NADP(+) = GMP + NADPH + 2 H(+). Catalyzes the irreversible NADPH-dependent deamination of GMP to IMP. It functions in the conversion of nucleobase, nucleoside and nucleotide derivatives of G to A nucleotides, and in maintaining the intracellular balance of A and G nucleotides. The sequence is that of GMP reductase from Escherichia coli (strain SMS-3-5 / SECEC).